Consider the following 117-residue polypeptide: Ribonuclease P protein component 4 (117 aa).

Zn(2+)-binding residues include cysteine 64, cysteine 67, cysteine 93, and cysteine 96.

The protein belongs to the eukaryotic/archaeal RNase P protein component 4 family. In terms of assembly, consists of a catalytic RNA component and at least 4-5 protein subunits. The cofactor is Zn(2+).

It is found in the cytoplasm. The enzyme catalyses Endonucleolytic cleavage of RNA, removing 5'-extranucleotides from tRNA precursor.. Part of ribonuclease P, a protein complex that generates mature tRNA molecules by cleaving their 5'-ends. This Pyrococcus abyssi (strain GE5 / Orsay) protein is Ribonuclease P protein component 4.